A 572-amino-acid chain; its full sequence is Probable D-xylulose kinase A (572 aa).

Substrate contacts are provided by H95, R166, D282, and N283. ATP is bound by residues W365, 470 to 471 (GG), and N474.

It belongs to the FGGY kinase family.

It localises to the cytoplasm. The catalysed reaction is D-xylulose + ATP = D-xylulose 5-phosphate + ADP + H(+). In terms of biological role, highly specific D-xylulose kinase which participates in the catabolism of xylose. Xylose is a major component of hemicelluloses such as xylan. Most fungi utilize D-xylose via three enzymatic reactions, xylose reductase (XR), xylitol dehydrogenase (XDH), and xylulokinase, to form xylulose 5-phosphate, which enters pentose phosphate pathway. This is Probable D-xylulose kinase A (xkiA) from Aspergillus flavus (strain ATCC 200026 / FGSC A1120 / IAM 13836 / NRRL 3357 / JCM 12722 / SRRC 167).